The primary structure comprises 331 residues: Putative ankyrin repeat protein FPV012 (331 aa).

ANK repeat units lie at residues 11-40 (DGYTSLYKETAKGNIKKVVELLYKGVNPNT), 44-73 (DSYTPLHIAAKTGNIKIIRRLIRYGANVDK), 77-106 (DGYTALLIAICTGDIKTCNVLLDEGANPNY), and 110-139 (YGITPLVRIISYYRPTILKLLMDRGANCNQ).

The protein is Putative ankyrin repeat protein FPV012 of Vertebrata (FPV).